Here is a 258-residue protein sequence, read N- to C-terminus: Hydroxyethylthiazole kinase (258 aa).

Residue M37 participates in substrate binding. Residues R112 and T158 each coordinate ATP. Residue A185 coordinates substrate.

It belongs to the Thz kinase family. It depends on Mg(2+) as a cofactor.

The catalysed reaction is 5-(2-hydroxyethyl)-4-methylthiazole + ATP = 4-methyl-5-(2-phosphooxyethyl)-thiazole + ADP + H(+). The protein operates within cofactor biosynthesis; thiamine diphosphate biosynthesis; 4-methyl-5-(2-phosphoethyl)-thiazole from 5-(2-hydroxyethyl)-4-methylthiazole: step 1/1. In terms of biological role, catalyzes the phosphorylation of the hydroxyl group of 4-methyl-5-beta-hydroxyethylthiazole (THZ). This is Hydroxyethylthiazole kinase from Rhizobium etli (strain CIAT 652).